The chain runs to 313 residues: Isoaspartyl peptidase (313 aa).

Catalysis depends on T179, which acts as the Nucleophile. Residues 207–210 (RVGD) and 230–233 (TGTG) each bind substrate.

The protein belongs to the Ntn-hydrolase family. In terms of assembly, heterotetramer of two alpha and two beta chains arranged as a dimer of alpha/beta heterodimers. Post-translationally, autocleaved. Generates the alpha and beta subunits. The beta subunit is thought to be responsible for the nucleophile hydrolase activity.

It catalyses the reaction Cleavage of a beta-linked Asp residue from the N-terminus of a polypeptide.. Degrades proteins damaged by L-isoaspartyl residue formation (also known as beta-Asp residues). Degrades L-isoaspartyl-containing di- and tripeptides. Acts best on iso-Asp-Leu, followed by iso-Asp-Ala, -His and to a lesser extent iso-Asp-Lys, -Phe and iso-Asp-Leu-Ala. Does not act on internal iso-Asp bonds (Als-iso-Asp-Leu-Ala). Does not act on alpha-Asp bonds. Has poor L-asparaginase activity. In Salmonella typhimurium (strain LT2 / SGSC1412 / ATCC 700720), this protein is Isoaspartyl peptidase (iaaA).